Here is a 449-residue protein sequence, read N- to C-terminus: Adenylosuccinate synthetase (449 aa).

Residues 12 to 18 (GDEGKGK) and 40 to 42 (GHT) each bind GTP. The Proton acceptor role is filled by Asp13. The Mg(2+) site is built by Asp13 and Gly40. Residues 13–16 (DEGK), 38–41 (NAGH), Thr128, Arg142, Gln223, Thr238, and Arg302 each bind IMP. The Proton donor role is filled by His41. Substrate is bound at residue 298–304 (TTTGRQR). GTP-binding positions include Arg304, 330 to 332 (KLD), and 412 to 414 (SLG).

Belongs to the adenylosuccinate synthetase family. In terms of assembly, homodimer. Requires Mg(2+) as cofactor.

It localises to the cytoplasm. It carries out the reaction IMP + L-aspartate + GTP = N(6)-(1,2-dicarboxyethyl)-AMP + GDP + phosphate + 2 H(+). It participates in purine metabolism; AMP biosynthesis via de novo pathway; AMP from IMP: step 1/2. Its function is as follows. Plays an important role in the de novo pathway of purine nucleotide biosynthesis. Catalyzes the first committed step in the biosynthesis of AMP from IMP. This is Adenylosuccinate synthetase from Synechococcus sp. (strain JA-2-3B'a(2-13)) (Cyanobacteria bacterium Yellowstone B-Prime).